The chain runs to 300 residues: L-threonine kinase (300 aa).

92–102 (PVAKGMASSTA) provides a ligand contact to ATP.

This sequence belongs to the GHMP kinase family. PduX subfamily.

Its subcellular location is the cytoplasm. The catalysed reaction is L-threonine + ATP = O-phospho-L-threonine + ADP + H(+). The protein operates within cofactor biosynthesis; adenosylcobalamin biosynthesis. It functions in the pathway polyol metabolism; 1,2-propanediol degradation. Functionally, L-threonine kinase that catalyzes the conversion of L-threonine to L-threonine-O-3-phosphate. Involved in the de novo synthesis of adenosylcobalamin (coenzyme B12) and the assimilation of cobyric acid. Uses ATP; the activity with CTP, GTP or UTP is 6, 11, and 3% of the activity with ATP, respectively. In terms of biological role, the 1,2-propanediol (1,2-PD)-specific bacterial microcompartment (BMC) concentrates low levels of 1,2-PD catabolic enzymes, concentrates volatile reaction intermediates thus enhancing pathway flux and keeps the level of toxic, mutagenic propionaldehyde low. This gene probably benefits from its induction via the Pdu promoter, rather than a physical interaction with the BMC. This chain is L-threonine kinase, found in Salmonella typhimurium (strain LT2 / SGSC1412 / ATCC 700720).